Consider the following 91-residue polypeptide: MPRSLKKGPFIDLHLLKKVETAVEVKDKKPIKTWSRRSTIFPEMVGLTIAVHNGRQHVPVYVTEDMVGHKLGEFAATRTYRGHAADKKAKR.

It belongs to the universal ribosomal protein uS19 family.

Functionally, protein S19 forms a complex with S13 that binds strongly to the 16S ribosomal RNA. The protein is Small ribosomal subunit protein uS19 of Hahella chejuensis (strain KCTC 2396).